A 354-amino-acid polypeptide reads, in one-letter code: ATPase GET3 (354 aa).

26–33 (KGGVGKTT) serves as a coordination point for ATP. Asp-57 is an active-site residue. ATP contacts are provided by Glu-245 and Asn-272. Residues Cys-285 and Cys-288 each coordinate Zn(2+).

This sequence belongs to the arsA ATPase family. Homodimer. Component of the Golgi to ER traffic (GET) complex, which is composed of GET1, GET2 and GET3. Within the complex, GET1 and GET2 form a heterotetramer which is stabilized by phosphatidylinositol binding and which binds to the GET3 homodimer. Interacts with the chloride channel protein GEF1.

The protein resides in the cytoplasm. It is found in the endoplasmic reticulum. It localises to the golgi apparatus. Functionally, ATPase required for the post-translational delivery of tail-anchored (TA) proteins to the endoplasmic reticulum. Recognizes and selectively binds the transmembrane domain of TA proteins in the cytosol. This complex then targets to the endoplasmic reticulum by membrane-bound receptors GET1 and GET2, where the tail-anchored protein is released for insertion. This process is regulated by ATP binding and hydrolysis. ATP binding drives the homodimer towards the closed dimer state, facilitating recognition of newly synthesized TA membrane proteins. ATP hydrolysis is required for insertion. Subsequently, the homodimer reverts towards the open dimer state, lowering its affinity for the GET1-GET2 receptor, and returning it to the cytosol to initiate a new round of targeting. Cooperates with the HDEL receptor ERD2 to mediate the ATP-dependent retrieval of resident ER proteins that contain a C-terminal H-D-E-L retention signal from the Golgi to the ER. Involved in low-level resistance to the oxyanions arsenite and arsenate, and in heat tolerance. In Saccharomyces cerevisiae (strain RM11-1a) (Baker's yeast), this protein is ATPase GET3.